Consider the following 127-residue polypeptide: UPF0102 protein Reut_A3265 (127 aa).

It belongs to the UPF0102 family.

The polypeptide is UPF0102 protein Reut_A3265 (Cupriavidus pinatubonensis (strain JMP 134 / LMG 1197) (Cupriavidus necator (strain JMP 134))).